A 191-amino-acid chain; its full sequence is Decorin-binding protein A (191 aa).

The first 29 residues, 1–29 (MIKCNNKTFNNLLKLTILVNLLISCGLTG), serve as a signal peptide directing secretion.

Belongs to the decorin-binding protein family.

In terms of biological role, binds to decorin which may mediate the adherence of B.burgdorferi to collagen fibers in skin and other tissues. The chain is Decorin-binding protein A (dbpA) from Borreliella burgdorferi (strain ATCC 35210 / DSM 4680 / CIP 102532 / B31) (Borrelia burgdorferi).